Consider the following 532-residue polypeptide: Cytochrome P450 99A2 (532 aa).

The chain crosses the membrane as a helical span at residues 30-50 (SAATLTLVSLLTLPILLALLT). Cysteine 468 is a heme binding site. A helical transmembrane segment spans residues 473–493 (FGMVLLELIVARLLYYFDWSL).

This sequence belongs to the cytochrome P450 family. The cofactor is heme.

It is found in the membrane. In terms of biological role, involved in momilactone phytoalexins biosynthesis. Participates in the biosynthetic steps between 9-beta-pimara-7,15-diene and 3-beta-hydroxy-9-beta-pimara-7,15-dien-19,6-beta-olide. This is Cytochrome P450 99A2 (CYP99A2) from Oryza sativa subsp. japonica (Rice).